Consider the following 231-residue polypeptide: MKRAVVVFSGGQDSTTCLAQALHQYDEVHCVTFDYGQRHRAEIDVARSLALKLGVRAHKMLDVTLLNELAVSSLTRDSIPVPDYEPNADGIPNTFVPGRNILFLTLAAIYAYQVKAEAVITGVCETDFSGYPDCRDEFVKALNRAVNLGMAKDIRFETPLMWLDKAETWALADYWGKLNLVREETLTCYNGIKGDGCGHCAACNLRANGLNHYLADKAAVVTAMKQKTGLQ.

8-18 (FSGGQDSTTCL) lines the ATP pocket. Positions 188, 197, 200, and 203 each coordinate Zn(2+).

It belongs to the QueC family. Zn(2+) serves as cofactor.

It carries out the reaction 7-carboxy-7-deazaguanine + NH4(+) + ATP = 7-cyano-7-deazaguanine + ADP + phosphate + H2O + H(+). It functions in the pathway purine metabolism; 7-cyano-7-deazaguanine biosynthesis. Catalyzes the ATP-dependent conversion of 7-carboxy-7-deazaguanine (CDG) to 7-cyano-7-deazaguanine (preQ(0)). The protein is 7-cyano-7-deazaguanine synthase of Salmonella arizonae (strain ATCC BAA-731 / CDC346-86 / RSK2980).